The sequence spans 739 residues: Protein kinase C (739 aa).

Residues 1–117 (MFTGKLQIKV…SETAVQDLWV (117 aa)) enclose the C2 domain. 2 consecutive Phorbol-ester/DAG-type zinc fingers follow at residues 176-226 (GHKF…VSKC) and 251-301 (PHRF…ANTC). One can recognise a Protein kinase domain in the interval 408–665 (FNFIKVLGKG…ENEIRKHPFF (258 aa)). ATP is bound by residues 414 to 422 (LGKGSFGKV) and K437. D532 (proton acceptor) is an active-site residue. Residues 666-737 (AKLDWKELEK…VNPKFGPERK (72 aa)) form the AGC-kinase C-terminal domain.

The protein belongs to the protein kinase superfamily. AGC Ser/Thr protein kinase family. PKC subfamily.

The enzyme catalyses L-seryl-[protein] + ATP = O-phospho-L-seryl-[protein] + ADP + H(+). The catalysed reaction is L-threonyl-[protein] + ATP = O-phospho-L-threonyl-[protein] + ADP + H(+). PKC is activated by diacylglycerol which in turn phosphorylates a range of cellular proteins. PKC also serves as the receptor for phorbol esters, a class of tumor promoters. In Drosophila melanogaster (Fruit fly), this protein is Protein kinase C (Pkc98E).